The following is a 148-amino-acid chain: MKVVLLQDVKGLGKKDSVVEVNDGYARNYLIPRKLAVPATEGLEKHLKEKKEAEQKKKEKELEAAKDLASKLEKSQIIIKAKAGENGKLFGSITNKEIAEEIKKQLGFDINKKKIELDDPIKLIGSYDVVIRLYQGVVAKLKVHVTAS.

It belongs to the bacterial ribosomal protein bL9 family.

Its function is as follows. Binds to the 23S rRNA. The sequence is that of Large ribosomal subunit protein bL9 from Caldicellulosiruptor bescii (strain ATCC BAA-1888 / DSM 6725 / KCTC 15123 / Z-1320) (Anaerocellum thermophilum).